The following is a 283-amino-acid chain: Elongation factor Ts (283 aa).

Residues 80 to 83 (TDFV) are involved in Mg(2+) ion dislocation from EF-Tu.

It belongs to the EF-Ts family.

It localises to the cytoplasm. Functionally, associates with the EF-Tu.GDP complex and induces the exchange of GDP to GTP. It remains bound to the aminoacyl-tRNA.EF-Tu.GTP complex up to the GTP hydrolysis stage on the ribosome. This is Elongation factor Ts from Haemophilus ducreyi (strain 35000HP / ATCC 700724).